Here is a 90-residue protein sequence, read N- to C-terminus: Progonadoliberin-3 (90 aa).

Residues methionine 1 to serine 23 form the signal peptide. Glutamine 24 bears the Pyrrolidone carboxylic acid mark. Glycine 33 carries the post-translational modification Glycine amide.

The protein belongs to the GnRH family.

It localises to the secreted. Stimulates the secretion of gonadotropins. The chain is Progonadoliberin-3 (gnrh3) from Sparus aurata (Gilthead sea bream).